The primary structure comprises 71 residues: DNA-directed RNA polymerase subunit epsilon (71 aa).

The protein belongs to the RNA polymerase subunit epsilon family. In terms of assembly, RNAP is composed of a core of 2 alpha, a beta and a beta' subunit. The core is associated with a delta subunit, and at least one of epsilon or omega. When a sigma factor is associated with the core the holoenzyme is formed, which can initiate transcription.

The enzyme catalyses RNA(n) + a ribonucleoside 5'-triphosphate = RNA(n+1) + diphosphate. A non-essential component of RNA polymerase (RNAP). This chain is DNA-directed RNA polymerase subunit epsilon, found in Anoxybacillus flavithermus (strain DSM 21510 / WK1).